The primary structure comprises 398 residues: Ubiquitin carboxyl-terminal hydrolase 17-like protein 6 (398 aa).

A USP domain is found at 80–375; the sequence is AGLQNMGNTC…QAYVLFYIQK (296 aa). Cys89 (nucleophile) is an active-site residue. The active-site Proton acceptor is His334.

Belongs to the peptidase C19 family. USP17 subfamily.

Its subcellular location is the nucleus. It is found in the cytoplasm. The enzyme catalyses Thiol-dependent hydrolysis of ester, thioester, amide, peptide and isopeptide bonds formed by the C-terminal Gly of ubiquitin (a 76-residue protein attached to proteins as an intracellular targeting signal).. In terms of biological role, deubiquitinating enzyme that removes conjugated ubiquitin from specific proteins to regulate different cellular processes that may include cell proliferation, progression through the cell cycle, cell migration, and the cellular response to viral infection. Seems to be non-functional in the regulation of apoptosis. The protein is Ubiquitin carboxyl-terminal hydrolase 17-like protein 6 (USP17L6P) of Homo sapiens (Human).